The chain runs to 596 residues: Sensor protein ChvG (596 aa).

The segment at 1–22 (MLKKTPETVSDSDDAEERGSER) is disordered. At 1-47 (MLKKTPETVSDSDDAEERGSERRHRIHPLTIIRRIFGNAVFSSLTRR) the chain is on the cytoplasmic side. Residues 48–68 (ILFFNVAATVVLVGGILYLNQ) form a helical membrane-spanning segment. Residues 69-283 (FREGLIDARV…VHAERLAIMR (215 aa)) are Periplasmic-facing. A helical membrane pass occupies residues 284 to 304 (VFGIATLVNIVLSLLLSSTIA). Positions 301-356 (STIATPLRRLSAAAIRVRRGARTREEIPDFSARQDEIGNLSIALREMTTALYDRID) constitute an HAMP domain. The Cytoplasmic portion of the chain corresponds to 305 to 596 (TPLRRLSAAA…SLPAAETHER (292 aa)). Residues 364 to 592 (DVSHELKNPL…RFTLSLPAAE (229 aa)) enclose the Histidine kinase domain. Position 367 is a phosphohistidine (His-367).

Its subcellular location is the cell inner membrane. The enzyme catalyses ATP + protein L-histidine = ADP + protein N-phospho-L-histidine.. In terms of biological role, member of a two-component regulatory system ChvG/ChvI. Activates ChvI by phosphorylation (Potential). This is Sensor protein ChvG (chvG) from Agrobacterium fabrum (strain C58 / ATCC 33970) (Agrobacterium tumefaciens (strain C58)).